The sequence spans 150 residues: Peptidoglycan-associated lipoprotein (150 aa).

Residues 1–19 (MKKLTKVLLVAGSVAVLAA) form the signal peptide. Cys20 carries the N-palmitoyl cysteine lipid modification. Residue Cys20 is the site of S-diacylglycerol cysteine attachment. The region spanning 37–150 (SVQDLQQRYN…SKNRRAVLAY (114 aa)) is the OmpA-like domain.

This sequence belongs to the Pal lipoprotein family. The Tol-Pal system is composed of five core proteins: the inner membrane proteins TolA, TolQ and TolR, the periplasmic protein TolB and the outer membrane protein Pal. They form a network linking the inner and outer membranes and the peptidoglycan layer.

The protein resides in the cell outer membrane. Its function is as follows. Part of the Tol-Pal system, which plays a role in outer membrane invagination during cell division and is important for maintaining outer membrane integrity. The chain is Peptidoglycan-associated lipoprotein from Pasteurella multocida (strain Pm70).